We begin with the raw amino-acid sequence, 474 residues long: Aspartyl protease family protein At5g10770 (474 aa).

Positions 1–25 (MSINRNLLNIIIILCICLNLGCNDG) are cleaved as a signal peptide. Residues 132–469 (YIVTVGLGTP…DGAGGRVGFA (338 aa)) form the Peptidase A1 domain. Catalysis depends on residues Asp150 and Asp352. Cys391 and Cys432 are joined by a disulfide. A lipid anchor (GPI-anchor amidated asparagine) is attached at Asn443. The propeptide at 444–474 (AAIFGNVQQQTLEVVYDGAGGRVGFAPNGCS) is removed in mature form.

It belongs to the peptidase A1 family.

The protein localises to the cell membrane. In terms of biological role, probably not redundant with AED1 and not involved in restriction of salicylic acid (SA) or systemic acquired resistance (SAR) signaling. This Arabidopsis thaliana (Mouse-ear cress) protein is Aspartyl protease family protein At5g10770.